A 447-amino-acid polypeptide reads, in one-letter code: Probable ethanolamine kinase B (447 aa).

Positions 178 to 208 are enriched in low complexity; it reads STTISTSTSTSTSTSSTSPSTSPSLENSTLS. The tract at residues 178–217 is disordered; it reads STTISTSTSTSTSTSSTSPSTSPSLENSTLSPRNMNTQTS.

This sequence belongs to the choline/ethanolamine kinase family.

It is found in the cytoplasm. The catalysed reaction is ethanolamine + ATP = phosphoethanolamine + ADP + H(+). Its pathway is phospholipid metabolism; phosphatidylethanolamine biosynthesis; phosphatidylethanolamine from ethanolamine: step 1/3. Its function is as follows. Highly specific for ethanolamine phosphorylation. May be a rate-controlling step in phosphatidylethanolamine biosynthesis. This chain is Probable ethanolamine kinase B (etnkB), found in Dictyostelium discoideum (Social amoeba).